Consider the following 136-residue polypeptide: uncharacterized protein (136 aa).

It to E.coli YcgX and YdfO.

This is an uncharacterized protein from Escherichia coli (strain K12).